We begin with the raw amino-acid sequence, 663 residues long: RING finger protein 145 (663 aa).

Helical transmembrane passes span 53–73, 77–97, 123–143, 146–166, 168–188, 205–222, 225–245, 275–295, 316–336, 340–360, 384–404, 410–430, 460–480, and 482–502; these read YLAL…LTLP, LVQL…HQIS, FTTA…VMKT, IWLF…VPLE, IVII…YFLG, LVQV…MSLW, LVVP…QIYS, YSLL…LTLC, TEGV…LQVV, FLLS…MLEI, SLCL…CQFF, LLII…TLFI, LLEF…TIFG, and WTVM…WLRA. The YLYF motif motif lies at 81–84; the sequence is YLYF. Cys537 is a catalytic residue. An RING-type; atypical zinc finger spans residues 537–575; sequence CAICYQDMKSAVITPCSHFFHAGCLKKWLYVQETCPLCH. Residues 607–663 form a disordered region; that stretch reads EGTEPPGQEHTPGTRIQEGSRDNNEYIARRPDNQEGAFDPKEYPHSAKDEAHPVESA. The span at 624-663 shows a compositional bias: basic and acidic residues; the sequence is EGSRDNNEYIARRPDNQEGAFDPKEYPHSAKDEAHPVESA.

In terms of assembly, interacts (via YLYF motif) with INSIG1 and INSIG2.

It is found in the endoplasmic reticulum membrane. The catalysed reaction is S-ubiquitinyl-[E2 ubiquitin-conjugating enzyme]-L-cysteine + [acceptor protein]-L-lysine = [E2 ubiquitin-conjugating enzyme]-L-cysteine + N(6)-ubiquitinyl-[acceptor protein]-L-lysine.. Functionally, E3 ubiquitin ligase that catalyzes the direct transfer of ubiquitin from E2 ubiquitin-conjugating enzyme to a specific substrate. In response to bacterial infection, negatively regulates the phagocyte oxidative burst by controlling the turnover of the NADPH oxidase complex subunits. Promotes monoubiquitination of CYBA and 'Lys-48'-linked polyubiquitination and degradation of CYBB NADPH oxidase catalytic subunits, both essential for the generation of antimicrobial reactive oxygen species. Involved in the maintenance of cholesterol homeostasis. In response to high sterol concentrations ubiquitinates HMGCR, a rate-limiting enzyme in cholesterol biosynthesis, and targets it for degradation. The interaction with INSIG1 is required for this function. In addition, triggers ubiquitination of SCAP, likely inhibiting its transport to the Golgi apparatus and the subsequent processing/maturation of SREBPF2, ultimately down-regulating cholesterol biosynthesis. This is RING finger protein 145 from Homo sapiens (Human).